A 267-amino-acid chain; its full sequence is 1-(5-phosphoribosyl)-5-[(5-phosphoribosylamino)methylideneamino] imidazole-4-carboxamide isomerase (267 aa).

This sequence belongs to the HisA/HisF family.

It localises to the cytoplasm. The catalysed reaction is 1-(5-phospho-beta-D-ribosyl)-5-[(5-phospho-beta-D-ribosylamino)methylideneamino]imidazole-4-carboxamide = 5-[(5-phospho-1-deoxy-D-ribulos-1-ylimino)methylamino]-1-(5-phospho-beta-D-ribosyl)imidazole-4-carboxamide. Its pathway is amino-acid biosynthesis; L-histidine biosynthesis; L-histidine from 5-phospho-alpha-D-ribose 1-diphosphate: step 4/9. This is 1-(5-phosphoribosyl)-5-[(5-phosphoribosylamino)methylideneamino] imidazole-4-carboxamide isomerase (HIS6) from Kluyveromyces lactis (strain ATCC 8585 / CBS 2359 / DSM 70799 / NBRC 1267 / NRRL Y-1140 / WM37) (Yeast).